We begin with the raw amino-acid sequence, 395 residues long: Chorismate synthase (395 aa).

2 residues coordinate NADP(+): Arg-40 and Arg-46. The segment at 99-120 (PREGRNAPLSRPRPGHADLTGM) is disordered. FMN is bound by residues 134 to 136 (RSS), 256 to 257 (QA), Gly-301, 316 to 320 (KPIPS), and Arg-342.

Belongs to the chorismate synthase family. As to quaternary structure, homotetramer. FMNH2 serves as cofactor.

It carries out the reaction 5-O-(1-carboxyvinyl)-3-phosphoshikimate = chorismate + phosphate. The protein operates within metabolic intermediate biosynthesis; chorismate biosynthesis; chorismate from D-erythrose 4-phosphate and phosphoenolpyruvate: step 7/7. Its function is as follows. Catalyzes the anti-1,4-elimination of the C-3 phosphate and the C-6 proR hydrogen from 5-enolpyruvylshikimate-3-phosphate (EPSP) to yield chorismate, which is the branch point compound that serves as the starting substrate for the three terminal pathways of aromatic amino acid biosynthesis. This reaction introduces a second double bond into the aromatic ring system. In Bifidobacterium longum (strain DJO10A), this protein is Chorismate synthase.